The primary structure comprises 437 residues: Protein translocase subunit SecY (437 aa).

10 helical membrane-spanning segments follow: residues 19-39 (LFTL…APGV), 68-88 (LLQI…SIIL), 121-141 (VALA…GALF), 156-176 (IFTT…VMWL), 188-208 (GMSI…LWAI), 218-238 (WIEF…VVFV), 274-294 (GVIP…IVQF), 317-337 (YIAT…AISF), 378-398 (SLYL…FGGA), and 400-420 (QNFP…LETV).

The protein belongs to the SecY/SEC61-alpha family. In terms of assembly, component of the Sec protein translocase complex. Heterotrimer consisting of SecY, SecE and SecG subunits. The heterotrimers can form oligomers, although 1 heterotrimer is thought to be able to translocate proteins. Interacts with the ribosome. Interacts with SecDF, and other proteins may be involved. Interacts with SecA.

The protein resides in the cell membrane. The central subunit of the protein translocation channel SecYEG. Consists of two halves formed by TMs 1-5 and 6-10. These two domains form a lateral gate at the front which open onto the bilayer between TMs 2 and 7, and are clamped together by SecE at the back. The channel is closed by both a pore ring composed of hydrophobic SecY resides and a short helix (helix 2A) on the extracellular side of the membrane which forms a plug. The plug probably moves laterally to allow the channel to open. The ring and the pore may move independently. The sequence is that of Protein translocase subunit SecY from Streptomyces griseus.